The sequence spans 233 residues: MNHFINLLVAEGFVRTNEPLTDQLVVHSVAGSGKSTLIRKFLEEQPLARAYTHCRADPPNLEGRFIQPFKGPCPDHFNILDEYCKEPISAKFQVLIADPLQYRTQHLRPHYVNHKSHRLGPETCKLLSSLGIKVESHRRDRDVVTLSGIFGSPILGQAIALDRSASDLLRAHGIQALCPIESIGQEYPVVTVVSSEPLRNVRFKDQVYIALSRHTEQLHVLSPEFPHTTSRPQ.

The region spanning 1–133 is the (+)RNA virus helicase ATP-binding domain; sequence MNHFINLLVA…CKLLSSLGIK (133 aa). A (+)RNA virus helicase C-terminal domain is found at 134–233; that stretch reads VESHRRDRDV…EFPHTTSRPQ (100 aa).

Belongs to the Tymovirales TGBp1 protein family. In terms of assembly, homodimer and homooligomer. Interacts with capsid protein. Interacts with host AGO1; this interaction targets the host protein for degradation, thereby suppressing the antiviral RNA silencing.

Its subcellular location is the host cytoplasm. Functionally, transports viral genome to neighboring plant cells directly through plasmosdesmata, without any budding. The movement protein allows efficient cell to cell propagation, by bypassing the host cell wall barrier. Increases plasmodesma size exclusion limit. Acts as a suppressor of RNA-mediated gene silencing, also known as post-transcriptional gene silencing (PTGS), a mechanism of plant viral defense that limits the accumulation of viral RNAs. The polypeptide is Movement and silencing protein TGBp1 (Carica papaya (Papaya)).